We begin with the raw amino-acid sequence, 247 residues long: 2,3-bisphosphoglycerate-dependent phosphoglycerate mutase (247 aa).

Substrate-binding positions include 8–15 (RHGESQWN), 21–22 (TG), arginine 60, 87–90 (ERHY), lysine 98, 114–115 (RR), and 183–184 (GN). Histidine 9 acts as the Tele-phosphohistidine intermediate in catalysis. The active-site Proton donor/acceptor is glutamate 87.

The protein belongs to the phosphoglycerate mutase family. BPG-dependent PGAM subfamily.

The enzyme catalyses (2R)-2-phosphoglycerate = (2R)-3-phosphoglycerate. It functions in the pathway carbohydrate degradation; glycolysis; pyruvate from D-glyceraldehyde 3-phosphate: step 3/5. Catalyzes the interconversion of 2-phosphoglycerate and 3-phosphoglycerate. The protein is 2,3-bisphosphoglycerate-dependent phosphoglycerate mutase of Chlorobaculum parvum (strain DSM 263 / NCIMB 8327) (Chlorobium vibrioforme subsp. thiosulfatophilum).